We begin with the raw amino-acid sequence, 145 residues long: Allergen MAG29 (145 aa).

2 disordered regions span residues 1–21 and 103–145; these read KDDI…DDKQ and AGGA…EEVD. The segment covering 104 to 137 has biased composition (gly residues); the sequence is GGAGAGGMPGGFPGGFPGTDGSGGGAAGGDGGKS.

The protein belongs to the heat shock protein 70 family.

The polypeptide is Allergen MAG29 (MAG29) (Dermatophagoides farinae (American house dust mite)).